Here is a 230-residue protein sequence, read N- to C-terminus: Magnesium-protoporphyrin O-methyltransferase (230 aa).

It belongs to the class I-like SAM-binding methyltransferase superfamily. Magnesium protoporphyrin O-methyltransferase family.

The enzyme catalyses Mg-protoporphyrin IX + S-adenosyl-L-methionine = Mg-protoporphyrin IX 13-monomethyl ester + S-adenosyl-L-homocysteine. It functions in the pathway porphyrin-containing compound metabolism; chlorophyll biosynthesis (light-independent). Its function is as follows. Converts Mg-protoporphyrin IX to Mg-protoporphyrin IX methylester using S-adenosyl-L-methionine as a cofactor. In Synechocystis sp. (strain ATCC 27184 / PCC 6803 / Kazusa), this protein is Magnesium-protoporphyrin O-methyltransferase (chlM).